Consider the following 107-residue polypeptide: Period circadian protein (107 aa).

A disordered region spans residues I81–N107. Low complexity predominate over residues T82–S95.

As to quaternary structure, forms a heterodimer with timeless (TIM); the complex then translocates into the nucleus. Post-translationally, phosphorylated with a circadian rhythmicity, probably by the double-time protein (dbt). Phosphorylation could be implicated in the stability of per monomer and in the formation of heterodimer per-tim.

It localises to the nucleus. The protein localises to the cytoplasm. It is found in the perinuclear region. Essential for biological clock functions. Determines the period length of circadian and ultradian rhythms; an increase in PER dosage leads to shortened circadian rhythms and a decrease leads to lengthened circadian rhythms. Essential for the circadian rhythmicity of locomotor activity, eclosion behavior, and for the rhythmic component of the male courtship song that originates in the thoracic nervous system. The biological cycle depends on the rhythmic formation and nuclear localization of the TIM-PER complex. Light induces the degradation of TIM, which promotes elimination of PER. Nuclear activity of the heterodimer coordinatively regulates PER and TIM transcription through a negative feedback loop. Behaves as a negative element in circadian transcriptional loop. Does not appear to bind DNA, suggesting indirect transcriptional inhibition. The sequence is that of Period circadian protein (per) from Beris vallata (Common orange legionnaire).